The primary structure comprises 407 residues: MSTVNQSSTRSELAGNWERLRKSCDTCQEAKVKCSQHKPSCHRCLRHRQPCVYSPQRRSGRPPKRPSPSSRLGPESNNSGDDIHNENTIQRTNLNANDSAMTDAGAVDPRVLTGDFAASTGIDPVDDIFQTSFESFLAASLSPKGGLLPGSHSNPTTPNGFSMNSPSITDPFGAFPFLITDHNLPIAALSSHVPPIDQLPVLSTGASNTSSECGDCGAKCYSSLLQHLLFLRQTLPESTRPSIDVIMQAEGHVRALLDRVLGCNACLGNRSSILLISAITERIVQMLDWIIEEKTLLDTENMRYNRRTFSSWGRPPRLPPHGLNGMRRNVCHVSLRVGNTELDEDAKQYFLKNFILLRLKKLAVKVQEVRRTATTRPGDCIYRAAELVLADSIQRLDYLRGQCQLWE.

Residues 23–53 (SCDTCQEAKVKCSQHKPSCHRCLRHRQPCVY) constitute a DNA-binding region (zn(2)-C6 fungal-type). A disordered region spans residues 53–85 (YSPQRRSGRPPKRPSPSSRLGPESNNSGDDIHN). Over residues 75–85 (ESNNSGDDIHN) the composition is skewed to polar residues.

It localises to the nucleus. Transcriptional regulator involved in the positive regulation of the expression of the gene cluster that mediates the biosynthesis of asperlin, a polyketide showing anti-inflammatory, antitumor and antibiotic activities. This Emericella nidulans (strain FGSC A4 / ATCC 38163 / CBS 112.46 / NRRL 194 / M139) (Aspergillus nidulans) protein is Transcriptional regulator alnR.